Here is an 802-residue protein sequence, read N- to C-terminus: Osmosensitive cation channel TMEM63C (802 aa).

Over 1 to 35 the chain is Extracellular; it reads MTASPESMGQKFRNMTANECFQSRSTVLQGQPFGG. The chain crosses the membrane as a helical span at residues 36–60; the sequence is IPTVLLLNIILWVCVVLVYSFLRKA. The Cytoplasmic segment spans residues 61–124; the sequence is AWDYGRLALL…RDRDLINKCG (64 aa). 2 positions are modified to phosphoserine: serine 75 and serine 78. The chain crosses the membrane as a helical span at residues 125–157; it reads EDARIYIMFQYHLIIFVLILCIPSLGIILPVNY. Over 158-180 the chain is Extracellular; it reads IGSALDWSSHFGRTTIVNVSTES. A helical membrane pass occupies residues 181–205; it reads QFLWLHSIFAFMYFLTNFAFMGHHC. Residues 206 to 401 are Cytoplasmic-facing; it reads LGFVPKKNLH…IIWKHLSIRR (196 aa). Residues 402–431 form a helical membrane-spanning segment; that stretch reads FSWWARFIAINTSLFFLFFFLTTPAIIINT. Residues 432–446 are Extracellular-facing; it reads IDMYNVTRPIEKLQS. The helical transmembrane segment at 447–476 threads the bilayer; the sequence is PVVTQFFPSVLLWAFTVIMPLLVYFSAFLE. Residues 477-480 are Cytoplasmic-facing; it reads AHWT. A helical transmembrane segment spans residues 481-517; it reads RSNQNLIIMYKCYIFLVFMVVILPSMGLTSLDVFLRW. The Extracellular segment spans residues 518–540; that stretch reads LFDIYYLEHATIRFQCVFLPDNG. Residues 541-573 traverse the membrane as a helical segment; it reads AFFINYVITSALFGTGMELMRLGSLCTYCTRLF. The Cytoplasmic portion of the chain corresponds to 574–593; sequence LSRSEPERVHIRKNLAMDFQ. A helical membrane pass occupies residues 594-612; the sequence is FGREYAWMLNVFSVVMAYS. Over 613–615 the chain is Extracellular; the sequence is ITC. A helical membrane pass occupies residues 616-640; it reads PIIVPFGLLYLCMKHITDRYNMYYS. Topologically, residues 641–647 are cytoplasmic; the sequence is YAPTKLN. The chain crosses the membrane as a helical span at residues 648–676; it reads AQIHMAAVYQAIFAPLLGLFWMLFFSILR. Topologically, residues 677-681 are extracellular; the sequence is VGSLH. Residues 682 to 702 form a helical membrane-spanning segment; sequence SITLFSLSSIIISVIIAFSGV. Topologically, residues 703–802 are cytoplasmic; sequence FLGKFRIAQQ…EGLELEGQSH (100 aa). Residues 753 to 785 form a disordered region; the sequence is TPASSPARHTYGTMNSQPEEGEEESGLRGFARE.

The protein belongs to the CSC1 (TC 1.A.17) family. In terms of assembly, monomer. As to expression, expressed in podocytes of kidney glomeruli.

It is found in the endoplasmic reticulum membrane. It localises to the cell membrane. The catalysed reaction is Ca(2+)(in) = Ca(2+)(out). Functionally, acts as an osmosensitive cation channel preferentially activated upon hypotonic stress. In contrast to TMEM63B, does not show phospholipid scramblase activity. Enriched in mitochondria-ER contact sites where it may regulate the metabolite flux and organelles' morphologies in response to osmotic changes. In particular may regulate mitochondrial motility and function in motor neuron axons. Required for the functional integrity of the kidney glomerular filtration barrier. This Rattus norvegicus (Rat) protein is Osmosensitive cation channel TMEM63C (Tmem63c).